Consider the following 73-residue polypeptide: Potassium channel toxin alpha-KTx 27.1 (73 aa).

An N-terminal signal peptide occupies residues Met-1–Ala-23.

This sequence belongs to the short scorpion toxin superfamily. Potassium channel inhibitor family. Alpha-KTx 27 subfamily. Post-translationally, contains 4 disulfide bonds. In terms of tissue distribution, expressed by the venom gland.

The protein resides in the secreted. The sequence is that of Potassium channel toxin alpha-KTx 27.1 from Buthus israelis (Israeli scorpion).